The chain runs to 105 residues: Cell division protein FtsB (105 aa).

Topologically, residues 1 to 3 (MRI) are cytoplasmic. Residues 4 to 21 (VIYSMLVLLIAIQYPLWL) traverse the membrane as a helical segment. The Periplasmic portion of the chain corresponds to 22–105 (GKGGWLKVYE…DTAKASTVKQ (84 aa)). The stretch at 32 to 60 (MEKQVELQEAKNSLLALRNAKLEGDVKDL) forms a coiled coil.

This sequence belongs to the FtsB family. Part of a complex composed of FtsB, FtsL and FtsQ.

The protein localises to the cell inner membrane. Functionally, essential cell division protein. May link together the upstream cell division proteins, which are predominantly cytoplasmic, with the downstream cell division proteins, which are predominantly periplasmic. This Polynucleobacter asymbioticus (strain DSM 18221 / CIP 109841 / QLW-P1DMWA-1) (Polynucleobacter necessarius subsp. asymbioticus) protein is Cell division protein FtsB.